We begin with the raw amino-acid sequence, 527 residues long: Bifunctional purine biosynthesis protein PurH (527 aa).

The 144-residue stretch at 1–144 folds into the MGS-like domain; the sequence is MNRRALISVS…KNHESVAIIV (144 aa).

This sequence belongs to the PurH family.

It carries out the reaction (6R)-10-formyltetrahydrofolate + 5-amino-1-(5-phospho-beta-D-ribosyl)imidazole-4-carboxamide = 5-formamido-1-(5-phospho-D-ribosyl)imidazole-4-carboxamide + (6S)-5,6,7,8-tetrahydrofolate. The catalysed reaction is IMP + H2O = 5-formamido-1-(5-phospho-D-ribosyl)imidazole-4-carboxamide. It participates in purine metabolism; IMP biosynthesis via de novo pathway; 5-formamido-1-(5-phospho-D-ribosyl)imidazole-4-carboxamide from 5-amino-1-(5-phospho-D-ribosyl)imidazole-4-carboxamide (10-formyl THF route): step 1/1. It functions in the pathway purine metabolism; IMP biosynthesis via de novo pathway; IMP from 5-formamido-1-(5-phospho-D-ribosyl)imidazole-4-carboxamide: step 1/1. The protein is Bifunctional purine biosynthesis protein PurH of Heliobacterium modesticaldum (strain ATCC 51547 / Ice1).